The primary structure comprises 192 residues: Superoxide dismutase [Fe] (192 aa).

Positions 26, 73, 157, and 161 each coordinate Fe cation.

This sequence belongs to the iron/manganese superoxide dismutase family. As to quaternary structure, homodimer. Fe cation is required as a cofactor.

It carries out the reaction 2 superoxide + 2 H(+) = H2O2 + O2. Functionally, destroys superoxide anion radicals which are normally produced within the cells and which are toxic to biological systems. The polypeptide is Superoxide dismutase [Fe] (Pseudoalteromonas translucida (strain TAC 125)).